The chain runs to 295 residues: Alpha-1A adrenergic receptor (295 aa).

Residues 1–27 (MVFLSGNASDSSNCTHPPAPVNISKAI) lie on the Extracellular side of the membrane. N-linked (GlcNAc...) asparagine glycosylation is found at Asn-7, Asn-13, and Asn-22. A helical membrane pass occupies residues 28–51 (LLGVILGGLIIFGVLGNILVILSV). Topologically, residues 52 to 64 (ACHRHLHSVTHYY) are cytoplasmic. The chain crosses the membrane as a helical span at residues 65 to 88 (IVNLAVADLLLTSTVLPFSAIFEI). Topologically, residues 89-99 (LGYWAFGRVFC) are extracellular. Cys-99 and Cys-176 are oxidised to a cystine. The helical transmembrane segment at 100-122 (NIWAAVDVLCCTASIMGLCIISI) threads the bilayer. The Cytoplasmic segment spans residues 123-143 (DRYIGVSYPLRYPTIVTQKRG). Residues 144–167 (LMALLCVWALSLVISIGPLFGWRQ) form a helical membrane-spanning segment. Residues 168–181 (PAPEDETICQITEE) lie on the Extracellular side of the membrane. Residues 182–205 (PGYVLFSALGSFYVPLTIILVMYC) traverse the membrane as a helical segment. The Cytoplasmic segment spans residues 206–273 (RVYVVAKRES…FSREKKAAKT (68 aa)). Residue Ser-215 is modified to Phosphoserine; by PKA. Residues 274–295 (LGIVVGCFVLCWLPFFLVMPIG) form a helical membrane-spanning segment.

The protein belongs to the G-protein coupled receptor 1 family. Adrenergic receptor subfamily. ADRA1A sub-subfamily. As to quaternary structure, homo- and heterooligomer. Heterooligomerizes with ADRA1B homooligomers in cardiac myocytes. Interacts with CAVIN4.

It is found in the nucleus membrane. It localises to the cell membrane. Its subcellular location is the cytoplasm. The protein resides in the membrane. The protein localises to the caveola. Its function is as follows. This alpha-adrenergic receptor mediates its action by association with G proteins that activate a phosphatidylinositol-calcium second messenger system. Its effect is mediated by G(q) and G(11) proteins. Nuclear ADRA1A-ADRA1B heterooligomers regulate phenylephrine (PE)-stimulated ERK signaling in cardiac myocytes. The protein is Alpha-1A adrenergic receptor (ADRA1A) of Canis lupus familiaris (Dog).